A 217-amino-acid polypeptide reads, in one-letter code: Imidazole glycerol phosphate synthase subunit HisH (217 aa).

Positions 3–217 (TIAIVDYGVG…LYRNFVHWNP (215 aa)) constitute a Glutamine amidotransferase type-1 domain. C82 acts as the Nucleophile in catalysis. Catalysis depends on residues H197 and E199.

Heterodimer of HisH and HisF.

Its subcellular location is the cytoplasm. The catalysed reaction is 5-[(5-phospho-1-deoxy-D-ribulos-1-ylimino)methylamino]-1-(5-phospho-beta-D-ribosyl)imidazole-4-carboxamide + L-glutamine = D-erythro-1-(imidazol-4-yl)glycerol 3-phosphate + 5-amino-1-(5-phospho-beta-D-ribosyl)imidazole-4-carboxamide + L-glutamate + H(+). It carries out the reaction L-glutamine + H2O = L-glutamate + NH4(+). It participates in amino-acid biosynthesis; L-histidine biosynthesis; L-histidine from 5-phospho-alpha-D-ribose 1-diphosphate: step 5/9. Its function is as follows. IGPS catalyzes the conversion of PRFAR and glutamine to IGP, AICAR and glutamate. The HisH subunit catalyzes the hydrolysis of glutamine to glutamate and ammonia as part of the synthesis of IGP and AICAR. The resulting ammonia molecule is channeled to the active site of HisF. In Cupriavidus pinatubonensis (strain JMP 134 / LMG 1197) (Cupriavidus necator (strain JMP 134)), this protein is Imidazole glycerol phosphate synthase subunit HisH.